The chain runs to 291 residues: Beta-lactamase Toho-1 (291 aa).

The first 29 residues, 1–29, serve as a signal peptide directing secretion; sequence MMTQSIRRSMLTVMATLPLLFSSATLHAQ. Serine 73 (acyl-ester intermediate) is an active-site residue. Residue 237 to 239 participates in substrate binding; it reads KTG.

It belongs to the class-A beta-lactamase family. Monomer.

The enzyme catalyses a beta-lactam + H2O = a substituted beta-amino acid. Its function is as follows. Has strong cefotaxime-hydrolyzing activity. The protein is Beta-lactamase Toho-1 (bla) of Escherichia coli.